We begin with the raw amino-acid sequence, 302 residues long: Putative RING-H2 finger protein ATL35 (302 aa).

The first 31 residues, Met1–Cys31, serve as a signal peptide directing secretion. The chain crosses the membrane as a helical span at residues Thr50 to Leu70. The RING-type; atypical zinc finger occupies Cys123–Arg165. Residue Ser226 is modified to Phosphoserine.

It belongs to the RING-type zinc finger family. ATL subfamily.

It localises to the membrane. The enzyme catalyses S-ubiquitinyl-[E2 ubiquitin-conjugating enzyme]-L-cysteine + [acceptor protein]-L-lysine = [E2 ubiquitin-conjugating enzyme]-L-cysteine + N(6)-ubiquitinyl-[acceptor protein]-L-lysine.. It participates in protein modification; protein ubiquitination. The polypeptide is Putative RING-H2 finger protein ATL35 (ATL35) (Arabidopsis thaliana (Mouse-ear cress)).